Here is a 660-residue protein sequence, read N- to C-terminus: MKEKFELVSAYDPAGDQPNAINEITKKVLAGQRHQTLLGATGTGKTFTMSNVVKEINRPTLVIAHNKTLAGQLYSEFKEFFPNNAVEYFVSYYDYYQPEAYVPSTDTFIEKDASINDEIDKLRHSATSALFERQDVLIVASVSCIYGLGNPEEYKSQVLSLRMGMEKDRDQLLRDLVEVQYARNDINFQRGTFRVRGDSVEIIPASHEEYCIRVEFFGDEIDRIREVDALTGEIIGDREHVAIFPASHFVTREEKMKIAIQNIEKELEEQLKEMRDNGKLLEAQRLEQRTNYDLEMMREMGFCSGIENYSRHLTLRGPGAVPYTLLDFFPEDFLVIIDESHVTLPQIRGMFNGDQARKQVLVDHGFRLPSAMDNRPLRFQEFEDKTKQLVYVSATPGPYELEHSPEMTEQIIRPTGLLDPKVEVRPIEGQIDNLIEEIRIRMEKNERVLITTLTKKMSEDLTDYLKEIGMKVAYLHSEIKTLERIEVIRDLRVGKFDVLVGINLLREGLDIPEVSLVSILDADKEGFLRSERSLIQTMGRAARNENGKVIMYADKMTDSMKKAIDETNRRRTIQTEYNEQHGITPKTIRKEVRDVIKATTAAEETESYEPKTKQINKMTKKEREKVIEQMENEMKQAAKDLDFEKAAELRDVILELKAEG.

Residues 26-414 (KKVLAGQRHQ…PEMTEQIIRP (389 aa)) form the Helicase ATP-binding domain. 39–46 (GATGTGKT) contacts ATP. The Beta-hairpin signature appears at 92–115 (YYDYYQPEAYVPSTDTFIEKDASI). The Helicase C-terminal domain occupies 430–596 (QIDNLIEEIR…TIRKEVRDVI (167 aa)). Positions 624–659 (EKVIEQMENEMKQAAKDLDFEKAAELRDVILELKAE) constitute a UVR domain.

The protein belongs to the UvrB family. In terms of assembly, forms a heterotetramer with UvrA during the search for lesions. Interacts with UvrC in an incision complex.

The protein localises to the cytoplasm. Its function is as follows. The UvrABC repair system catalyzes the recognition and processing of DNA lesions. A damage recognition complex composed of 2 UvrA and 2 UvrB subunits scans DNA for abnormalities. Upon binding of the UvrA(2)B(2) complex to a putative damaged site, the DNA wraps around one UvrB monomer. DNA wrap is dependent on ATP binding by UvrB and probably causes local melting of the DNA helix, facilitating insertion of UvrB beta-hairpin between the DNA strands. Then UvrB probes one DNA strand for the presence of a lesion. If a lesion is found the UvrA subunits dissociate and the UvrB-DNA preincision complex is formed. This complex is subsequently bound by UvrC and the second UvrB is released. If no lesion is found, the DNA wraps around the other UvrB subunit that will check the other stand for damage. The polypeptide is UvrABC system protein B (Oceanobacillus iheyensis (strain DSM 14371 / CIP 107618 / JCM 11309 / KCTC 3954 / HTE831)).